Here is a 355-residue protein sequence, read N- to C-terminus: LIM/homeobox protein lim-4 (355 aa).

LIM zinc-binding domains follow at residues 96 to 155 (VICT…THVT) and 166 to 228 (PKCA…LVEG). Residues 239-298 (TKRVRTTFAEDQLSVLQTYFNRDSNPDGADLEKIASMTGLSKRVTQVWFQNSRARQKKWH) constitute a DNA-binding region (homeobox). Residues 291–336 (RARQKKWHQKSEGDNGDSQRSSVGPSSPSQKSDSSSEMMYPTSVTT) form a disordered region. Positions 306 to 326 (GDSQRSSVGPSSPSQKSDSSS) are enriched in low complexity.

Interacts with transcription factor sox-2. In terms of tissue distribution, expressed in the AWB sensory neurons and in one RME motor neuron (RMEV), two RMD motor neurons (RMDL and RMDR), the RID, RIV, SAA and SIA interneurons and the SMB sensory/inter/motor neurons.

It localises to the nucleus. Its function is as follows. Transcription factor that binds to the promoter of target genes. Regulates genes involved in serotonin synthesis and release in serotonergic ADF neurons. Involved in specification of neuron cell fate, olfactory receptor expression, locomotion, and foraging behavior. Required in AWB olfactory neurons to repress AWC cell fate and promote the AWB cell fate during early development. Cooperates with additional factors to direct the differentiation of the olfactory neurons, functioning with the transcription factor sox-2 to suppress AWC terminal differentiation and promote AWB neuron differentiation. Involved in regulating terminal specification and maintenance of the SMB sensory/inter/motor neurons. Plays a role in regulation of RID motor neuron differentiation, but is dispensable for motor axon outgrowth in the dorsal nerve cord. May regulate its own expression. This is LIM/homeobox protein lim-4 from Caenorhabditis elegans.